We begin with the raw amino-acid sequence, 208 residues long: Holliday junction branch migration complex subunit RuvA (208 aa).

The segment at 1–63 (MIGMLTGRVE…QDSVTLYGFL (63 aa)) is domain I. Residues 64–142 (DRDSKRVFLQ…LNQSDDASAG (79 aa)) are domain II. Positions 143 to 151 (NAPYQPTVD) are flexible linker. The interval 151-208 (DAGVEQVVEGLVSLGWRQQDAQRAVNEACAENDVPMPLASDDAPRVLRLALARMDRGR) is domain III.

This sequence belongs to the RuvA family. Homotetramer. Forms an RuvA(8)-RuvB(12)-Holliday junction (HJ) complex. HJ DNA is sandwiched between 2 RuvA tetramers; dsDNA enters through RuvA and exits via RuvB. An RuvB hexamer assembles on each DNA strand where it exits the tetramer. Each RuvB hexamer is contacted by two RuvA subunits (via domain III) on 2 adjacent RuvB subunits; this complex drives branch migration. In the full resolvosome a probable DNA-RuvA(4)-RuvB(12)-RuvC(2) complex forms which resolves the HJ.

It localises to the cytoplasm. In terms of biological role, the RuvA-RuvB-RuvC complex processes Holliday junction (HJ) DNA during genetic recombination and DNA repair, while the RuvA-RuvB complex plays an important role in the rescue of blocked DNA replication forks via replication fork reversal (RFR). RuvA specifically binds to HJ cruciform DNA, conferring on it an open structure. The RuvB hexamer acts as an ATP-dependent pump, pulling dsDNA into and through the RuvAB complex. HJ branch migration allows RuvC to scan DNA until it finds its consensus sequence, where it cleaves and resolves the cruciform DNA. This chain is Holliday junction branch migration complex subunit RuvA, found in Bifidobacterium longum subsp. infantis (strain ATCC 15697 / DSM 20088 / JCM 1222 / NCTC 11817 / S12).